The primary structure comprises 394 residues: Argininosuccinate synthase (394 aa).

ATP is bound by residues 7 to 15 (AYSGGLDTS) and A34. Y85 and S90 together coordinate L-citrulline. Residue G115 participates in ATP binding. Residues T117, N121, and D122 each coordinate L-aspartate. N121 contributes to the L-citrulline binding site. R125, S176, S185, E261, and Y273 together coordinate L-citrulline.

It belongs to the argininosuccinate synthase family. Type 1 subfamily. Homotetramer.

The protein resides in the cytoplasm. The enzyme catalyses L-citrulline + L-aspartate + ATP = 2-(N(omega)-L-arginino)succinate + AMP + diphosphate + H(+). The protein operates within amino-acid biosynthesis; L-arginine biosynthesis; L-arginine from L-ornithine and carbamoyl phosphate: step 2/3. The chain is Argininosuccinate synthase from Ehrlichia ruminantium (strain Gardel).